The following is a 143-amino-acid chain: Deoxyuridine 5'-triphosphate nucleotidohydrolase (143 aa).

Substrate contacts are provided by residues 62-64, asparagine 75, and 79-81; these read RSG and TID.

It belongs to the dUTPase family. It depends on Mg(2+) as a cofactor.

It carries out the reaction dUTP + H2O = dUMP + diphosphate + H(+). It functions in the pathway pyrimidine metabolism; dUMP biosynthesis; dUMP from dCTP (dUTP route): step 2/2. This enzyme is involved in nucleotide metabolism: it produces dUMP, the immediate precursor of thymidine nucleotides and it decreases the intracellular concentration of dUTP so that uracil cannot be incorporated into DNA. This Acaryochloris marina (strain MBIC 11017) protein is Deoxyuridine 5'-triphosphate nucleotidohydrolase.